The sequence spans 157 residues: Transcription elongation factor GreA (157 aa).

The protein belongs to the GreA/GreB family.

Functionally, necessary for efficient RNA polymerase transcription elongation past template-encoded arresting sites. The arresting sites in DNA have the property of trapping a certain fraction of elongating RNA polymerases that pass through, resulting in locked ternary complexes. Cleavage of the nascent transcript by cleavage factors such as GreA or GreB allows the resumption of elongation from the new 3'terminus. GreA releases sequences of 2 to 3 nucleotides. In Chelativorans sp. (strain BNC1), this protein is Transcription elongation factor GreA.